A 401-amino-acid polypeptide reads, in one-letter code: Transcriptional regulator Myc-2 (401 aa).

An O-linked (GlcNAc) threonine glycan is attached at Thr58. The short motif at 76 to 84 (EMVSEFLGD) is the 9aaTAD element. Disordered stretches follow at residues 177 to 251 (SSKS…SRYP) and 286 to 325 (LESSSSNNSSSNRQGKQRKCTSPRTSDSEDNDKRRTHNVL). Positions 205–230 (DSEDEEEEEEEEEEEEEEEEEEEEID) are enriched in acidic residues. Residues 233–247 (TVEKRQKRNEAEVSD) are compositionally biased toward basic and acidic residues. The span at 288–297 (SSSSNNSSSN) shows a compositional bias: low complexity. The 53-residue stretch at 317–369 (DKRRTHNVLERQRRNELKLSFFALRDEIPEVANNEKAAKVVILKKATECIHSM) folds into the bHLH domain. The interval 376-397 (LLSIKEQLRRKSEQLKHRLQQL) is leucine-zipper.

In terms of assembly, efficient DNA binding requires dimerization with another bHLH protein. Binds DNA as a heterodimer with MAX.

The protein localises to the nucleus. Functionally, transcription factor that binds DNA in a non-specific manner, yet also specifically recognizes the core sequence 5'-CAC[GA]TG-3'. Activates the transcription of growth-related genes. The sequence is that of Transcriptional regulator Myc-2 (mycb) from Cyprinus carpio (Common carp).